A 122-amino-acid chain; its full sequence is Large ribosomal subunit protein uL14 (122 aa).

Belongs to the universal ribosomal protein uL14 family. As to quaternary structure, part of the 50S ribosomal subunit. Forms a cluster with proteins L3 and L19. In the 70S ribosome, L14 and L19 interact and together make contacts with the 16S rRNA in bridges B5 and B8.

In terms of biological role, binds to 23S rRNA. Forms part of two intersubunit bridges in the 70S ribosome. In Methylococcus capsulatus (strain ATCC 33009 / NCIMB 11132 / Bath), this protein is Large ribosomal subunit protein uL14.